A 382-amino-acid chain; its full sequence is Lipid-A-disaccharide synthase (382 aa).

The protein belongs to the LpxB family.

The enzyme catalyses 2-N,3-O-bis[(3R)-3-hydroxytetradecanoyl]-alpha-D-glucosaminyl 1-phosphate + UDP-2-N,3-O-bis[(3R)-3-hydroxytetradecanoyl]-alpha-D-glucosamine = lipid A disaccharide (E. coli) + UDP + H(+). It carries out the reaction a lipid X + a UDP-2-N,3-O-bis[(3R)-3-hydroxyacyl]-alpha-D-glucosamine = a lipid A disaccharide + UDP + H(+). It participates in glycolipid biosynthesis; lipid IV(A) biosynthesis; lipid IV(A) from (3R)-3-hydroxytetradecanoyl-[acyl-carrier-protein] and UDP-N-acetyl-alpha-D-glucosamine: step 5/6. Functionally, condensation of UDP-2,3-diacylglucosamine and 2,3-diacylglucosamine-1-phosphate to form lipid A disaccharide, a precursor of lipid A, a phosphorylated glycolipid that anchors the lipopolysaccharide to the outer membrane of the cell. In Escherichia coli O45:K1 (strain S88 / ExPEC), this protein is Lipid-A-disaccharide synthase.